Here is a 696-residue protein sequence, read N- to C-terminus: Polyribonucleotide nucleotidyltransferase (696 aa).

Positions 486 and 492 each coordinate Mg(2+). Residues 553 to 612 form the KH domain; that stretch reads PRIIVRNIPKDRIGELIGPGGKNVRGISELTGAELYIEDDGRVTISGSNQESAEKAAKMV. In terms of domain architecture, S1 motif spans 622-690; that stretch reads GKIYEGKVKR…KTGKIDLSRK (69 aa).

Belongs to the polyribonucleotide nucleotidyltransferase family. It depends on Mg(2+) as a cofactor.

Its subcellular location is the cytoplasm. The enzyme catalyses RNA(n+1) + phosphate = RNA(n) + a ribonucleoside 5'-diphosphate. Functionally, involved in mRNA degradation. Catalyzes the phosphorolysis of single-stranded polyribonucleotides processively in the 3'- to 5'-direction. This is Polyribonucleotide nucleotidyltransferase from Leptospira borgpetersenii serovar Hardjo-bovis (strain JB197).